The following is a 154-amino-acid chain: Large ribosomal subunit protein uL13 (154 aa).

It belongs to the universal ribosomal protein uL13 family. Part of the 50S ribosomal subunit.

This protein is one of the early assembly proteins of the 50S ribosomal subunit, although it is not seen to bind rRNA by itself. It is important during the early stages of 50S assembly. The chain is Large ribosomal subunit protein uL13 from Rhizobium leguminosarum bv. trifolii (strain WSM2304).